The chain runs to 1524 residues: Protein dispatched homolog 1 (1524 aa).

Residue asparagine 59 is glycosylated (N-linked (GlcNAc...) asparagine). 4 helical membrane-spanning segments follow: residues 190–210 (VVVLGMCTMFIVVCALVGVLV), 500–520 (LLMDTVYPAIAIVIVLLVMCV), 525–545 (MFITLMTMFAIISSLIVSYFL), and 549–569 (VFHFEFFPFMNLTALIILVGI). In terms of domain architecture, SSD spans 486 to 658 (GIEFGIKHSL…VTWLPAVVVL (173 aa)). Asparagine 582 carries N-linked (GlcNAc...) asparagine glycosylation. 8 helical membrane-spanning segments follow: residues 604 to 624 (AALSMFVTSFTTAAAFYANYV), 638 to 658 (GTAILVNYVLMVTWLPAVVVL), 719 to 739 (YLWLFWFLALTVGGAYIVCIN), 988 to 1008 (MGLSVAVAFSVMLLTTWNIII), 1010 to 1030 (LYAIISIAGTIFVTVGSLVLL), 1040 to 1060 (VTISVAVGLSVDFAVHYGVAY), 1079 to 1099 (VGSAMAMAALTTFVAGAMMMP), and 1107 to 1127 (QLGTFMMLIMCISWAFATFFF).

It belongs to the dispatched family. Interacts with SHH via the cholesterol anchor of the dually lipid-modified SHH (ShhNp).

Its subcellular location is the membrane. Functions in hedgehog (Hh) signaling. Regulates the release and extracellular accumulation of cholesterol-modified hedgehog proteins and is hence required for effective production of the Hh signal. Synergizes with SCUBE2 to cause an increase in SHH secretion. The protein is Protein dispatched homolog 1 (DISP1) of Homo sapiens (Human).